A 187-amino-acid chain; its full sequence is NAC domain-containing protein 104 (187 aa).

The region spanning 3-155 (LPPGFRFFPT…KWVICRVYEQ (153 aa)) is the NAC domain. The DNA-binding element occupies 94–161 (VGIKKYLTFY…VYEQNCSEEE (68 aa)). The interval 118-142 (LPDSSSSSSRSSKRSSRASSSSHKP) is disordered.

In terms of tissue distribution, expressed in root xylem vessels. Expressed in stems, vascular tissue of cauline leaves and tracheary elements of sepals.

It is found in the nucleus. In terms of biological role, probable transcription factor that influences tracheary elements and xylem development by negatively regulating secondary cell wall fiber synthesis and programmed cell death. The sequence is that of NAC domain-containing protein 104 from Arabidopsis thaliana (Mouse-ear cress).